We begin with the raw amino-acid sequence, 156 residues long: Ribosomal RNA large subunit methyltransferase H (156 aa).

S-adenosyl-L-methionine contacts are provided by residues Leu-73, Gly-104, and 123–128 (LSALTL).

It belongs to the RNA methyltransferase RlmH family. As to quaternary structure, homodimer.

It is found in the cytoplasm. The catalysed reaction is pseudouridine(1915) in 23S rRNA + S-adenosyl-L-methionine = N(3)-methylpseudouridine(1915) in 23S rRNA + S-adenosyl-L-homocysteine + H(+). Specifically methylates the pseudouridine at position 1915 (m3Psi1915) in 23S rRNA. The sequence is that of Ribosomal RNA large subunit methyltransferase H from Shewanella woodyi (strain ATCC 51908 / MS32).